The primary structure comprises 452 residues: Na(+)/H(+) antiporter NhaA (452 aa).

11 helical membrane-spanning segments follow: residues 23-43 (MMLFLASVLAVIMANSSLSTI), 71-91 (LLQFVNDVLMVIFFLAVGLEI), 108-128 (LPIVGAIGGMIVPVLFFLLVV), 136-156 (GAAIPMSTDIAFALAALAVLG), 165-185 (VFLTALAVADDIGGIIVIALF), 189-209 (HINIGMLAIAFGILFIMYLMG), 216-236 (LGLYFVCTFFVWLFFLQSGIH), 316-336 (IVGYFVLPLFAFANAGITLGG), 349-369 (VFLGLFVGKPLGIYFFTYGFV), 385-405 (LMAVSLFGGIGFTVSLFIATL), and 418-438 (EAKLGIFVASIFAAVVGIVTL).

The protein belongs to the NhaA Na(+)/H(+) (TC 2.A.33) antiporter family.

The protein resides in the cell inner membrane. The catalysed reaction is Na(+)(in) + 2 H(+)(out) = Na(+)(out) + 2 H(+)(in). In terms of biological role, na(+)/H(+) antiporter that extrudes sodium in exchange for external protons. In Porphyromonas gingivalis (strain ATCC 33277 / DSM 20709 / CIP 103683 / JCM 12257 / NCTC 11834 / 2561), this protein is Na(+)/H(+) antiporter NhaA.